The sequence spans 833 residues: Leucine--tRNA ligase (833 aa).

The 'HIGH' region motif lies at 41 to 52; it reads PYPSGAGLHVGH. Residues 610–614 carry the 'KMSKS' region motif; the sequence is KMSKS. K613 lines the ATP pocket.

Belongs to the class-I aminoacyl-tRNA synthetase family.

Its subcellular location is the cytoplasm. The catalysed reaction is tRNA(Leu) + L-leucine + ATP = L-leucyl-tRNA(Leu) + AMP + diphosphate. In Streptococcus pyogenes serotype M2 (strain MGAS10270), this protein is Leucine--tRNA ligase.